Reading from the N-terminus, the 495-residue chain is Alkaline protease 2 (495 aa).

A signal peptide spans 1 to 16 (MKGYLSLSILPLLVAA). Residues 17-136 (SPVVVDSIHN…IEKDSEVHTM (120 aa)) constitute a propeptide that is removed on maturation. Positions 43-136 (SYIVVFKKHV…IEKDSEVHTM (94 aa)) constitute an Inhibitor I9 domain. Residues 146 to 452 (PWGLARISHR…GGSSNYTDII (307 aa)) enclose the Peptidase S8 domain. Residues D182 and H214 each act as charge relay system in the active site. N284 carries an N-linked (GlcNAc...) asparagine glycan. The active-site Charge relay system is S380. N-linked (GlcNAc...) asparagine glycosylation is found at N447 and N460.

The protein belongs to the peptidase S8 family.

It carries out the reaction Hydrolysis of proteins with broad specificity, and of Bz-Arg-OEt &gt; Ac-Tyr-OEt. Does not hydrolyze peptide amides.. In terms of biological role, alkaline protease that allows assimilation of proteinaceous substrates. Acts as a significant virulence factor in invasive aspergillosis. Required for regular sporulation. In Aspergillus fumigatus (strain CBS 144.89 / FGSC A1163 / CEA10) (Neosartorya fumigata), this protein is Alkaline protease 2 (alp2).